Reading from the N-terminus, the 316-residue chain is Nucleoprotein (316 aa).

Positions 43, 46, 76, 122, and 240 each coordinate RNA.

This sequence belongs to the tenuiviruses nucleocapsid protein family.

Its subcellular location is the virion. The protein localises to the host cytoplasm. Encapsidates the genome, protecting it from nucleases. The encapsidated genomic RNA is termed the nucleocapsid (NC), and serves as template for viral transcription and replication. In Maize stripe virus (MStV), this protein is Nucleoprotein.